A 1411-amino-acid polypeptide reads, in one-letter code: Protein ECM5 (1411 aa).

The JmjN domain maps to Ile118–Phe159. One can recognise an ARID domain in the interval Arg185–Glu279. A disordered region spans residues Arg285–Pro312. The region spanning Lys476–Ser695 is the JmjC domain. A PHD-type zinc finger spans residues Thr1238 to Pro1290.

It is found in the nucleus. Functionally, may be involved in cell wall organization and biogenesis. This chain is Protein ECM5 (ECM5), found in Saccharomyces cerevisiae (strain ATCC 204508 / S288c) (Baker's yeast).